Here is a 1135-residue protein sequence, read N- to C-terminus: Potassium channel subfamily T member 2 (1135 aa).

At M1–R63 the chain is on the cytoplasmic side. The chain crosses the membrane as a helical span at residues L64 to E84. Over N85–S101 the chain is Extracellular. N99 carries an N-linked (GlcNAc...) asparagine glycan. Residues L102–L122 traverse the membrane as a helical segment. At G123–R137 the chain is on the cytoplasmic side. Residues I138–S158 form a helical membrane-spanning segment. Residues L159–V164 lie on the Extracellular side of the membrane. The chain crosses the membrane as a helical span at residues P165–H185. The Cytoplasmic segment spans residues R186–Q198. The helical transmembrane segment at V199–H219 threads the bilayer. Residues L220–N228 lie on the Extracellular side of the membrane. Positions L229–T249 form an intramembrane region, pore-forming. Residues P250–K256 are Extracellular-facing. A helical membrane pass occupies residues L257–L277. Residues A278–L1135 are Cytoplasmic-facing. RCK N-terminal domains lie at E299–V435 and N718–L858. Disordered regions lie at residues V977–L1010, W1017–I1036, and S1113–L1135. Positions W1017 to G1030 are enriched in basic residues. Positions R1118–Q1127 are enriched in polar residues.

The protein belongs to the potassium channel family. Calcium-activated (TC 1.A.1.3) subfamily. KCa4.2/KCNT2 sub-subfamily. Homotetramer. Forms heteromeric channels with KCNT1; these heterodimer channels differ from the homomers in their unitary conductance, kinetic behavior, subcellular localization, and response to activation of protein kinase C. Post-translationally, phosphorylated by protein kinase C. Phosphorylation of the C-terminal domain inhibits channel activity.

Its subcellular location is the cell membrane. The enzyme catalyses K(+)(in) = K(+)(out). With respect to regulation, are normally in a closed state unless activated by an increase in intracellular Na(+) and Cl(-). Inhibited upon stimulation of G-protein coupled receptors, such as CHRM1 and GRM1. There is conflicting data about the effect of ATP on KNCT2 channels activity. Intracellular ATP was initially report to inhibit the channel activity. However, others studies conclude that KNCT2 channels are not inhibited by intracellular ATP. Functionally, sodium-activated and chloride-activated potassium channel. Produces rapidly activating outward rectifier K(+) currents. Contributes to regulate neuronal excitability. The chain is Potassium channel subfamily T member 2 (KCNT2) from Homo sapiens (Human).